The primary structure comprises 513 residues: Cytochrome P450 monooxygenase CYP3 (513 aa).

The disordered stretch occupies residues 1 to 21 (MLPRSLGHSTSELSPPFDGPN). A heme-binding site is contributed by Cys-451.

This sequence belongs to the cytochrome P450 family. Requires heme as cofactor.

Its pathway is secondary metabolite biosynthesis. In terms of biological role, cytochrome P450 monooxygenase; part of the gene cluster that mediates the biosynthesis of a tyrosine-derived cytochalasan acting as a fungal signal recognized by resistant rice plants and leads to avirulence in Pi33 resistant rice cultivars. The first step in the pathway is catalyzed by the hybrid PKS-NRPS ACE1, assisted by the enoyl reductase RAP1, that are responsible for fusion of the tyrosine precursor and the polyketide backbone. The polyketide synthase module (PKS) of ACE1 is responsible for the synthesis of the polyketide backbone and the downstream nonribosomal peptide synthetase (NRPS) amidates the carboxyl end of the polyketide with the tyrosine precursor. Because ACE1 lacks a designated enoylreductase (ER) domain, the required activity is provided the enoyl reductase RAP1. Reduction by the hydrolyase ORFZ, followed by dehydration and intra-molecular Diels-Alder cyclization by the Diels-Alderase ORF3 then yield the required isoindolone-fused macrocycle. A number of oxidative steps catalyzed by the tailoring enzymes identified within the cluster, including cytochrome P450 monooxygenases CYP1 to CYP4, the FAD-linked oxidoreductase OXR2 and the short-chain dehydrogenase/reductase OXR1, are further required to afford the final cytochalasans that confer avirulence and which have still to be identified. The monooxygenase CYP1 has been shown to be a site-selective C-18 hydroxylase whereas the function of CYP3 is the site-selective epoxidation of the C-6/C-7 olefin that is present in some intermediate compounds. Finally, SYN2 and RAP2 are not required for avirulence in Pi33 resistant rice cultivars. This is Cytochrome P450 monooxygenase CYP3 from Pyricularia oryzae (strain 70-15 / ATCC MYA-4617 / FGSC 8958) (Rice blast fungus).